Reading from the N-terminus, the 122-residue chain is Large ribosomal subunit protein uL18 (122 aa).

The interval 1-20 (MFKKVSKNANRLSRHQRVRN) is disordered.

Belongs to the universal ribosomal protein uL18 family. As to quaternary structure, part of the 50S ribosomal subunit; part of the 5S rRNA/L5/L18/L25 subcomplex. Contacts the 5S and 23S rRNAs.

This is one of the proteins that bind and probably mediate the attachment of the 5S RNA into the large ribosomal subunit, where it forms part of the central protuberance. The chain is Large ribosomal subunit protein uL18 from Alkaliphilus oremlandii (strain OhILAs) (Clostridium oremlandii (strain OhILAs)).